A 130-amino-acid polypeptide reads, in one-letter code: Small ribosomal subunit protein uS9 (130 aa).

The protein belongs to the universal ribosomal protein uS9 family.

The polypeptide is Small ribosomal subunit protein uS9 (Bordetella bronchiseptica (strain ATCC BAA-588 / NCTC 13252 / RB50) (Alcaligenes bronchisepticus)).